The primary structure comprises 100 residues: NADH-quinone oxidoreductase subunit K (100 aa).

The next 3 helical transmembrane spans lie at 4-24 (LQHG…CLVL), 28-48 (LLFM…AFVV), and 60-80 (IMYI…LALL).

The protein belongs to the complex I subunit 4L family. In terms of assembly, NDH-1 is composed of 13 different subunits. Subunits NuoA, H, J, K, L, M, N constitute the membrane sector of the complex.

The protein resides in the cell inner membrane. The catalysed reaction is a quinone + NADH + 5 H(+)(in) = a quinol + NAD(+) + 4 H(+)(out). Its function is as follows. NDH-1 shuttles electrons from NADH, via FMN and iron-sulfur (Fe-S) centers, to quinones in the respiratory chain. The immediate electron acceptor for the enzyme in this species is believed to be ubiquinone. Couples the redox reaction to proton translocation (for every two electrons transferred, four hydrogen ions are translocated across the cytoplasmic membrane), and thus conserves the redox energy in a proton gradient. This chain is NADH-quinone oxidoreductase subunit K, found in Proteus mirabilis (strain HI4320).